A 1722-amino-acid chain; its full sequence is Lymphocyte antigen 75 (1722 aa).

The first 27 residues, 1 to 27 (MRTGWATPRRPAGLLMLLFWFFDLAEP), serve as a signal peptide directing secretion. Topologically, residues 28-1666 (SGRAANDPFT…VVCKVPLGPD (1639 aa)) are extracellular. Residues 33-156 (NDPFTIVHGN…ESLCDQPYHE (124 aa)) form the Ricin B-type lectin domain. The N-linked (GlcNAc...) asparagine glycan is linked to asparagine 135. The Fibronectin type-II domain maps to 164–211 (SYGRPCEFPFLIDGTWHHDCILDEDHSGPWCATTLNYEYDRKWGICLK). 4 cysteine pairs are disulfide-bonded: cysteine 169-cysteine 194, cysteine 183-cysteine 209, cysteine 247-cysteine 340, and cysteine 317-cysteine 332. The 117-residue stretch at 225–341 (QFGSCYQFNT…CEAQLPYVCR (117 aa)) folds into the C-type lectin 1 domain. 2 N-linked (GlcNAc...) asparagine glycosylation sites follow: asparagine 345 and asparagine 377. C-type lectin domains lie at 368–486 (NNGF…YVCK), 493–625 (NDAS…ICKK), 652–778 (ASLS…IYLR), and 818–931 (IEGS…FICE). 2 cysteine pairs are disulfide-bonded: cysteine 389-cysteine 485 and cysteine 462-cysteine 477. Asparagine 529 carries N-linked (GlcNAc...) asparagine glycosylation. A disulfide bridge links cysteine 597 with cysteine 614. 2 cysteine pairs are disulfide-bonded: cysteine 840–cysteine 930 and cysteine 904–cysteine 922. 2 N-linked (GlcNAc...) asparagine glycosylation sites follow: asparagine 843 and asparagine 865. The residue at position 933 (tyrosine 933) is a Phosphotyrosine. N-linked (GlcNAc...) asparagine glycosylation is found at asparagine 934, asparagine 1076, and asparagine 1103. In terms of domain architecture, C-type lectin 6 spans 958-1091 (FQNKCFLKIK…ERHFVSLCQK (134 aa)). A disulfide bond links cysteine 1060 and cysteine 1080. Positions 1110–1222 (YLNNLYKIIP…DNQPGAICYY (113 aa)) constitute a C-type lectin 7 domain. The cysteines at positions 1197 and 1211 are disulfide-linked. Asparagine 1225, asparagine 1320, and asparagine 1392 each carry an N-linked (GlcNAc...) asparagine glycan. The 124-residue stretch at 1251–1374 (FQNCCYNFII…VIEEAVYFHQ (124 aa)) folds into the C-type lectin 8 domain. C-type lectin domains are found at residues 1401-1513 (YEDG…ICYK) and 1542-1661 (YKGH…VCKV). A disulfide bridge connects residues cysteine 1488 and cysteine 1502. N-linked (GlcNAc...) asparagine glycans are attached at residues asparagine 1593 and asparagine 1626. Cysteine 1635 and cysteine 1650 are oxidised to a cystine. Residues 1667–1691 (YTAIAIIVATLSILVLMGGLIWFLF) traverse the membrane as a helical segment. Topologically, residues 1692 to 1722 (QRHRLHLAGFSSVRYAQGVNEDEIMLPSFHD) are cytoplasmic. A phosphoserine mark is found at serine 1703 and serine 1719.

N-glycosylated. As to expression, expressed in spleen, thymus, colon and peripheral blood lymphocytes. Detected in myeloid and B-lymphoid cell lines. Isoform 2 and isoform 3 are expressed in malignant Hodgkin lymphoma cells called Hodgkin and Reed-Sternberg (HRS) cells.

Its subcellular location is the membrane. Acts as an endocytic receptor to direct captured antigens from the extracellular space to a specialized antigen-processing compartment. Causes reduced proliferation of B-lymphocytes. This Homo sapiens (Human) protein is Lymphocyte antigen 75 (LY75).